The sequence spans 401 residues: MAVPAVEFPWEEQPMSAFATPITPAPIPDNISLTELIDKYFTAYNSARLREICQLLSQRVFKPEVTVGLSLSGAMTPTGLGISALAPLVRAGFVDYIISTGANLYHDIHYALGMDLYAAHPFVDDVQLRKESKIRIYDIIFDYDVLLETDAFLRQVLRSETFQRRMGTAEFHYHLGHYVRELEVQRGQPHSCLLATAYECGVPIYTSSPGDSSIGMNVAAIALEGSKLIIDPAIDVNETAAIAYFAREAAGGKGKSAALIIGGGSPKNFLLQTQPQIHEVLGLEERGHDYFIQITDARPDTGGLSGAVPSEAVSWGKVDPQGLRDTVVCYTDSTIALPILTAYCLNRCQPRPLKRLYDRRGEMVERLQQLYLQAQLQHKVKELPTEAPVATYPCGTPIRRP.

Belongs to the deoxyhypusine synthase family.

This Thermosynechococcus vestitus (strain NIES-2133 / IAM M-273 / BP-1) protein is Deoxyhypusine synthase-like protein.